Consider the following 123-residue polypeptide: Large ribosomal subunit protein eL8 (123 aa).

It belongs to the eukaryotic ribosomal protein eL8 family. In terms of assembly, part of the 50S ribosomal subunit. Probably part of the RNase P complex.

The protein localises to the cytoplasm. In terms of biological role, multifunctional RNA-binding protein that recognizes the K-turn motif in ribosomal RNA, the RNA component of RNase P, box H/ACA, box C/D and box C'/D' sRNAs. This Methanobrevibacter smithii (strain ATCC 35061 / DSM 861 / OCM 144 / PS) protein is Large ribosomal subunit protein eL8.